The primary structure comprises 158 residues: Ribosome maturation factor RimP (158 aa).

It belongs to the RimP family.

The protein resides in the cytoplasm. In terms of biological role, required for maturation of 30S ribosomal subunits. In Pseudomonas fluorescens (strain SBW25), this protein is Ribosome maturation factor RimP.